The following is a 269-amino-acid chain: Putative pyruvate, phosphate dikinase regulatory protein (269 aa).

An ADP-binding site is contributed by 147 to 154 (GLSRTSKT).

It belongs to the pyruvate, phosphate/water dikinase regulatory protein family. PDRP subfamily.

It carries out the reaction N(tele)-phospho-L-histidyl/L-threonyl-[pyruvate, phosphate dikinase] + ADP = N(tele)-phospho-L-histidyl/O-phospho-L-threonyl-[pyruvate, phosphate dikinase] + AMP + H(+). The enzyme catalyses N(tele)-phospho-L-histidyl/O-phospho-L-threonyl-[pyruvate, phosphate dikinase] + phosphate + H(+) = N(tele)-phospho-L-histidyl/L-threonyl-[pyruvate, phosphate dikinase] + diphosphate. In terms of biological role, bifunctional serine/threonine kinase and phosphorylase involved in the regulation of the pyruvate, phosphate dikinase (PPDK) by catalyzing its phosphorylation/dephosphorylation. This Clostridium botulinum (strain ATCC 19397 / Type A) protein is Putative pyruvate, phosphate dikinase regulatory protein.